The chain runs to 159 residues: Ribosomal RNA large subunit methyltransferase H (159 aa).

S-adenosyl-L-methionine is bound by residues leucine 76, glycine 108, and 127–132; that span reads FGKLTM.

Belongs to the RNA methyltransferase RlmH family. As to quaternary structure, homodimer.

It localises to the cytoplasm. The enzyme catalyses pseudouridine(1915) in 23S rRNA + S-adenosyl-L-methionine = N(3)-methylpseudouridine(1915) in 23S rRNA + S-adenosyl-L-homocysteine + H(+). Specifically methylates the pseudouridine at position 1915 (m3Psi1915) in 23S rRNA. This chain is Ribosomal RNA large subunit methyltransferase H, found in Lacticaseibacillus casei (strain BL23) (Lactobacillus casei).